The following is a 444-amino-acid chain: N-succinylarginine dihydrolase (444 aa).

Substrate is bound by residues 19 to 28, N110, and 137 to 138; these read AGLSFGNVAS and HR. The active site involves E174. R214 contributes to the substrate binding site. H250 is an active-site residue. Substrate contacts are provided by D252 and N362. The active-site Nucleophile is the C368.

This sequence belongs to the succinylarginine dihydrolase family. In terms of assembly, homodimer.

It carries out the reaction N(2)-succinyl-L-arginine + 2 H2O + 2 H(+) = N(2)-succinyl-L-ornithine + 2 NH4(+) + CO2. It functions in the pathway amino-acid degradation; L-arginine degradation via AST pathway; L-glutamate and succinate from L-arginine: step 2/5. Its function is as follows. Catalyzes the hydrolysis of N(2)-succinylarginine into N(2)-succinylornithine, ammonia and CO(2). In Shewanella putrefaciens (strain CN-32 / ATCC BAA-453), this protein is N-succinylarginine dihydrolase.